A 103-amino-acid polypeptide reads, in one-letter code: Large ribosomal subunit protein bL21 (103 aa).

The protein belongs to the bacterial ribosomal protein bL21 family. Part of the 50S ribosomal subunit. Contacts protein L20.

In terms of biological role, this protein binds to 23S rRNA in the presence of protein L20. The chain is Large ribosomal subunit protein bL21 from Clostridium beijerinckii (strain ATCC 51743 / NCIMB 8052) (Clostridium acetobutylicum).